Here is a 211-residue protein sequence, read N- to C-terminus: EAINQGMDEELERDEKVFLLGEEVAQYDGAYKVSRTYYMSAGLQPVPIVFRGPNGASAGVAAQHSQCFAAWYGHCPGLKVVSPWNSEDAKGLIKSAIRDDNPVVMLENELMYGVAFELPTEAQSKDFLIPIGKEGIECEVINLRTIRPMDIEAIEASVMKTNHLVTVEGGWPQFGVGAEICARIMEGPAFNFLDAPAVRVTGADVPMPYAK.

At Tyr-31 the chain carries Phosphotyrosine. Ile-48, Ala-96, Ile-97, Asp-99, and Asn-101 together coordinate K(+).

Heterotetramer of two PDHA1 and two PDHB subunits. The heterotetramer interacts with DLAT, and is part of the multimeric pyruvate dehydrogenase complex that contains multiple copies of pyruvate dehydrogenase (E1), dihydrolipoamide acetyltransferase (DLAT, E2) and lipoamide dehydrogenase (DLD, E3). These subunits are bound to an inner core composed of about 48 DLAT and 12 PDHX molecules. Interacts with DLAT. It depends on thiamine diphosphate as a cofactor.

The protein localises to the mitochondrion matrix. It carries out the reaction N(6)-[(R)-lipoyl]-L-lysyl-[protein] + pyruvate + H(+) = N(6)-[(R)-S(8)-acetyldihydrolipoyl]-L-lysyl-[protein] + CO2. Functionally, the pyruvate dehydrogenase complex catalyzes the overall conversion of pyruvate to acetyl-CoA and CO(2), and thereby links the glycolytic pathway to the tricarboxylic cycle. The sequence is that of Pyruvate dehydrogenase E1 component subunit beta, mitochondrial from Mesocricetus auratus (Golden hamster).